A 365-amino-acid polypeptide reads, in one-letter code: UBX domain-containing protein 2B (365 aa).

The interval Met-1 to Phe-97 is disordered. Basic and acidic residues-rich tracts occupy residues Asp-50–Thr-63 and Leu-73–Gln-95. One can recognise an SEP domain in the interval Asp-175–Val-240. In terms of domain architecture, UBX spans Asp-286–Gln-363.

It belongs to the NSFL1C family.

It is found in the nucleus. The protein resides in the cytoplasm. Its subcellular location is the cytosol. It localises to the endoplasmic reticulum. The protein localises to the golgi apparatus. It is found in the cytoskeleton. The protein resides in the microtubule organizing center. Its subcellular location is the centrosome. Its function is as follows. Adapter protein required for Golgi and endoplasmic reticulum biogenesis. Involved in Golgi and endoplasmic reticulum maintenance during interphase and in their reassembly at the end of mitosis. Regulates the centrosomal levels of kinase AURKA/Aurora A during mitotic progression by promoting AURKA removal from centrosomes in prophase. Also, regulates spindle orientation during mitosis. The sequence is that of UBX domain-containing protein 2B (UBXN2B) from Gallus gallus (Chicken).